We begin with the raw amino-acid sequence, 59 residues long: U-actitoxin-Aer2a (59 aa).

Contains 5 disulfide bonds.

Its subcellular location is the secreted. The protein resides in the nematocyst. This chain is U-actitoxin-Aer2a, found in Anemonia erythraea (Sea anemone).